A 652-amino-acid polypeptide reads, in one-letter code: MRLAASIAVALPVIGAASAQGFPPPVMGVTVVKSKYDENVKITYKENDICETTEGVRSFTGHVHLPPDNDYFGVYQNYSINTFFWFFEAREDPKNAPLSIWLNGGPGSSSMIGLFQENGPCWINDDSKSTTNNSFSWNNRVNMLYIDQPNQVGFSYDELTNITYSTINDTISVADFSSGVPAQNLSTLVGTGSSQKPWATANNTVNAARSIWHFAQVWFQEFPEHKPNNNKISIWTESYGGRYGPSFASYFQEQNEKIKNHTITKEGEMHILNLDTLGVINGCIDLMFQAESYAEFPYNNTYGITAYTKEKRDAIIRDIHRPDGCFDKLAKCREAAKEGDPHFYSNNATVNAICAEANSDCDKYLMEPFQEANLGYYDIAHPLQDPFPPPFFKGFLSQSSVLSDMGSPVNFSHYSQAVGKSFHGVGDYARPDVRGFTGDIAYLLESGVKVALVYGDRDYICNWLGGEQVSLGLNYTGTEAFRKAGYADVKVNSSYVGGLVRQHGNFSFTRVFEAGHEVPGYQPETSLKIFERIMFNKDIATGELDIAQKQDYGTTGTESTFQVKNEIPPSPEPTCYLLSADGTCTPEQLNAIENGTAVVENYIIKSPAASKGNPPPTTTSSPTASPTAGSAMLKAPVAMLAISALTVLAFYL.

The first 19 residues, 1–19, serve as a signal peptide directing secretion; it reads MRLAASIAVALPVIGAASA. Cysteine 50 and cysteine 121 are joined by a disulfide. N-linked (GlcNAc...) asparagine glycans are attached at residues asparagine 77, asparagine 132, asparagine 161, asparagine 168, asparagine 184, and asparagine 202. Serine 238 is an active-site residue. Residues asparagine 260, asparagine 299, asparagine 347, and asparagine 410 are each glycosylated (N-linked (GlcNAc...) asparagine). Intrachain disulfides connect cysteine 325-cysteine 361 and cysteine 332-cysteine 354. Aspartate 458 is a catalytic residue. Cysteine 461 is a binding site for substrate. N-linked (GlcNAc...) asparagine glycosylation is found at asparagine 474, asparagine 492, and asparagine 505. Residue histidine 516 is part of the active site. Glutamate 517 is a binding site for substrate. The N-linked (GlcNAc...) asparagine glycan is linked to asparagine 594. The tract at residues 608-628 is disordered; it reads AASKGNPPPTTTSSPTASPTA. Over residues 618–628 the composition is skewed to low complexity; the sequence is TTSSPTASPTA. Glycine 629 carries the GPI-anchor amidated glycine lipid modification. Positions 630–652 are cleaved as a propeptide — removed in mature form; it reads SAMLKAPVAMLAISALTVLAFYL.

Belongs to the peptidase S10 family.

It is found in the cell membrane. The catalysed reaction is Preferential release of a C-terminal arginine or lysine residue.. Its function is as follows. Extracellular serine carboxypeptidase that contributes to pathogenicity. In Arthroderma benhamiae (strain ATCC MYA-4681 / CBS 112371) (Trichophyton mentagrophytes), this protein is Carboxypeptidase S1 homolog A (SCPA).